A 277-amino-acid chain; its full sequence is Inositol monophosphatase 1 (277 aa).

Positions 70, 90, 92, and 93 each coordinate Mg(2+). Glu70 contributes to the substrate binding site. Residues Ile92–Thr95, Gly194–Ala196, Glu213, and Asp220 contribute to the substrate site. Position 220 (Asp220) interacts with Mg(2+).

This sequence belongs to the inositol monophosphatase superfamily. As to quaternary structure, homodimer. Mg(2+) is required as a cofactor. Ubiquitous.

The protein resides in the cytoplasm. The catalysed reaction is a myo-inositol phosphate + H2O = myo-inositol + phosphate. The enzyme catalyses 1D-myo-inositol 1-phosphate + H2O = myo-inositol + phosphate. It catalyses the reaction 1D-myo-inositol 2-phosphate + H2O = myo-inositol + phosphate. It carries out the reaction 1D-myo-inositol 3-phosphate + H2O = myo-inositol + phosphate. The catalysed reaction is 1D-myo-inositol 4-phosphate + H2O = myo-inositol + phosphate. The enzyme catalyses 1D-myo-inositol 5-phosphate + H2O = myo-inositol + phosphate. It catalyses the reaction 1D-myo-inositol 6-phosphate + H2O = myo-inositol + phosphate. It carries out the reaction scyllo-inositol 1-phosphate + H2O = scyllo-inositol + phosphate. The catalysed reaction is alpha-D-galactose 1-phosphate + H2O = D-galactose + phosphate. The enzyme catalyses alpha-D-glucose 1-phosphate + H2O = D-glucose + phosphate. It catalyses the reaction D-glucose 6-phosphate + H2O = D-glucose + phosphate. It carries out the reaction beta-D-fructose 1-phosphate + H2O = D-fructose + phosphate. The catalysed reaction is glycerol 2-phosphate + H2O = glycerol + phosphate. The enzyme catalyses adenosine 2'-phosphate + H2O = adenosine + phosphate. Its pathway is polyol metabolism; myo-inositol biosynthesis; myo-inositol from D-glucose 6-phosphate: step 2/2. Its activity is regulated as follows. Activity with myo-inositol monophosphate and D-galactose 1-phosphate is inhibited by Li(+), Ca(2+) and Mn(2+), but also by Mg(2+) at concentrations above 3 mM. Functionally, phosphatase involved in the dephosphorylation of myo-inositol monophosphate to generate myo-inositol. Is also able to dephosphorylate scyllo-inositol-phosphate, myo-inositol 1,4-diphosphate, scyllo-inositol-1,3-diphosphate and scyllo-inositol-1,4-diphosphate. Also dephosphorylates in vitro other sugar-phosphates including D-galactose-1-phosphate, glucose-1-phosphate, glucose-6-phosphate, fructose-1-phosphate, beta-glycerophosphate and 2'-AMP. Responsible for the provision of inositol required for synthesis of phosphatidylinositol and polyphosphoinositides, and involved in maintaining normal brain function. Has been implicated as the pharmacological target for lithium Li(+) action in brain. Is equally active with myo-inositol monophosphate and D-galactose 1-phosphate. This Rattus norvegicus (Rat) protein is Inositol monophosphatase 1 (Impa1).